Consider the following 1203-residue polypeptide: Metabotropic glutamate receptor 5 (1203 aa).

An N-terminal signal peptide occupies residues 1-18; it reads MVLLLILSVLLLKEDVRG. Residues 19-579 are Extracellular-facing; it reads SAQSSERRVV…QYLRWGDPEP (561 aa). Cysteines 57 and 99 form a disulfide. Residue tyrosine 64 participates in L-glutamate binding. Asparagine 88 is a glycosylation site (N-linked (GlcNAc...) asparagine). L-glutamate-binding positions include serine 151 and 172–174; that span reads SAT. The N-linked (GlcNAc...) asparagine glycan is linked to asparagine 209. Tyrosine 222 is an L-glutamate binding site. 8 disulfides stabilise this stretch: cysteine 240-cysteine 529, cysteine 275-cysteine 277, cysteine 364-cysteine 380, cysteine 418-cysteine 425, cysteine 510-cysteine 530, cysteine 514-cysteine 533, cysteine 536-cysteine 548, and cysteine 551-cysteine 564. Position 304 (aspartate 304) interacts with L-glutamate. Residues asparagine 377 and asparagine 381 are each glycosylated (N-linked (GlcNAc...) asparagine). Lysine 395 provides a ligand contact to L-glutamate. Asparagine 444 is a glycosylation site (N-linked (GlcNAc...) asparagine). A helical transmembrane segment spans residues 580-602; that stretch reads IAAVVFACLGLLATLFVTVIFII. Residues 603 to 612 lie on the Cytoplasmic side of the membrane; sequence YRDTPVVKSS. A helical membrane pass occupies residues 613-635; it reads SRELCYIILAGICLGYLCTFCLI. At 636 to 643 the chain is on the extracellular side; it reads AKPKQIYC. Cysteine 643 and cysteine 732 are oxidised to a cystine. The helical transmembrane segment at 644-666 threads the bilayer; sequence YLQRIGIGLSPAMSYSALVTKTN. Topologically, residues 667–692 are cytoplasmic; it reads RIARILAGSKKKICTKKPRFMSACAQ. The helical transmembrane segment at 693–713 threads the bilayer; sequence LVIAFILICIQLGIIVALFIM. The Extracellular segment spans residues 714 to 736; the sequence is EPPDIMHDYPSIREVYLICNTTN. Residue asparagine 733 is glycosylated (N-linked (GlcNAc...) asparagine). The chain crosses the membrane as a helical span at residues 737 to 758; that stretch reads LGVVTPLGYNGLLILSCTFYAF. Residues 759 to 771 lie on the Cytoplasmic side of the membrane; the sequence is KTRNVPANFNEAK. A helical transmembrane segment spans residues 772-794; it reads YIAFTMYTTCIIWLAFVPIYFGS. Residues 795-797 lie on the Extracellular side of the membrane; sequence NYK. A helical membrane pass occupies residues 798-819; the sequence is IITMCFSVSLSATVALGCMFVP. Over 820–1203 the chain is Cytoplasmic; sequence KVYIILAKPE…RDYTQSSSSL (384 aa). Serine 860 is modified (phosphoserine). Arginine 868 carries the post-translational modification Omega-N-methylarginine. Disordered regions lie at residues 892 to 1054 and 1120 to 1182; these read FTPK…GSLM and TGGA…ALCI. Residues 905–920 are compositionally biased toward polar residues; the sequence is TMSSSNGKSVTWAQNE. Arginine 924 is subject to Omega-N-methylarginine. Over residues 960–977 the composition is skewed to gly residues; sequence QGAGAGGGSGPGAAGAGS. Positions 1007–1019 are enriched in low complexity; sequence PAAARPRSPSPIS. Serine 1014 and serine 1016 each carry phosphoserine. 2 stretches are compositionally biased toward polar residues: residues 1039–1054 and 1165–1176; these read HSET…GSLM and DSGSTTPNSPVS.

This sequence belongs to the G-protein coupled receptor 3 family. As to quaternary structure, the PPXXF motif binds HOMER1, HOMER2 and HOMER3. Interacts with RYR1, RYR2, ITPR1, SHANK1 and SHANK3. Interacts with SIAH1 and TAMALIN. Interacts with NCDN. Interacts with NECAB2. Interacts with CAMK2A.

Its subcellular location is the cell membrane. In terms of biological role, G-protein coupled receptor for glutamate. Ligand binding causes a conformation change that triggers signaling via guanine nucleotide-binding proteins (G proteins) and modulates the activity of down-stream effectors. Signaling activates a phosphatidylinositol-calcium second messenger system and generates a calcium-activated chloride current. Plays an important role in the regulation of synaptic plasticity and the modulation of the neural network activity. The polypeptide is Metabotropic glutamate receptor 5 (Grm5) (Mus musculus (Mouse)).